A 364-amino-acid chain; its full sequence is Triacylglycerol lipase (364 aa).

The signal sequence occupies residues 1 to 44; sequence MARTMRSRVVAGAVACAMSIAPFAGTTAVMTLATTHAAMAATAP. The AB hydrolase-1 domain maps to 54-333; it reads PIILVHGLSG…TSYKWNHLDE (280 aa). L61 serves as a coordination point for substrate. The Nucleophile role is filled by S131. Q132 lines the substrate pocket. Residues C234 and C314 are joined by a disulfide bond. D286 is a Ca(2+) binding site. Catalysis depends on charge relay system residues D308 and H330. Ca(2+)-binding residues include D332, Q336, and V340.

The protein belongs to the AB hydrolase superfamily. Pseudomonas lipase family. In terms of assembly, monomer. Ca(2+) is required as a cofactor.

The protein resides in the secreted. The enzyme catalyses a triacylglycerol + H2O = a diacylglycerol + a fatty acid + H(+). Functionally, catalyzes the hydrolysis of triacylglycerol. The polypeptide is Triacylglycerol lipase (Pseudomonas sp. (strain KWI-56)).